A 1205-amino-acid polypeptide reads, in one-letter code: ATP-dependent DNA helicase MER3 homolog (1205 aa).

The Helicase ATP-binding domain maps to 41 to 236; sequence PACFLSDVNM…WLAVPSEGIK (196 aa). 54–61 is an ATP binding site; sequence APTGSGKT. Positions 172–175 match the DEAH box motif; it reads DEVH. A Helicase C-terminal domain is found at 266–467; sequence RLQSFIFDIL…CAVEHLNAEI (202 aa). An SEC63 domain is found at 541–852; it reads PLEPGRLMTK…FEEYVGLDIH (312 aa). Residues 1075–1091 are compositionally biased toward polar residues; sequence QKSEILNRTQGKNSTQL. A disordered region spans residues 1075–1131; it reads QKSEILNRTQGKNSTQLAGKKAFEKSKTPDENSLHFVGKRDSSSEKSKALSKTPDEN. Over residues 1095 to 1122 the composition is skewed to basic and acidic residues; the sequence is KAFEKSKTPDENSLHFVGKRDSSSEKSK.

The protein belongs to the helicase family. SKI2 subfamily. Transcribed preferentially in early stages of meiocyte development and during meiosis in young flowers.

The protein resides in the nucleus. It localises to the chromosome. It carries out the reaction Couples ATP hydrolysis with the unwinding of duplex DNA by translocating in the 3'-5' direction.. The enzyme catalyses ATP + H2O = ADP + phosphate + H(+). Its function is as follows. DNA helicase required for crossover formation, complete synapsis of homologous chromosomes and bivalent formation during meiosis. Is specific to recombination events resulting in interference-sensitive crossovers (class I meiotic crossover). Works cooperatively with ZIP4 to promote crossovers. The chain is ATP-dependent DNA helicase MER3 homolog from Oryza sativa subsp. japonica (Rice).